Consider the following 361-residue polypeptide: Peptide chain release factor 1 (361 aa).

Position 237 is an N5-methylglutamine (Gln237). The span at 283 to 296 (VEDEKRRSEEESTR) shows a compositional bias: basic and acidic residues. The disordered stretch occupies residues 283–305 (VEDEKRRSEEESTRRNLVSSGDR).

It belongs to the prokaryotic/mitochondrial release factor family. Methylated by PrmC. Methylation increases the termination efficiency of RF1.

It is found in the cytoplasm. In terms of biological role, peptide chain release factor 1 directs the termination of translation in response to the peptide chain termination codons UAG and UAA. The chain is Peptide chain release factor 1 from Shewanella woodyi (strain ATCC 51908 / MS32).